Reading from the N-terminus, the 445-residue chain is Phosphoglucosamine mutase (445 aa).

Ser-99 serves as the catalytic Phosphoserine intermediate. The Mg(2+) site is built by Ser-99, Asp-242, Asp-244, and Asp-246. At Ser-99 the chain carries Phosphoserine.

The protein belongs to the phosphohexose mutase family. Mg(2+) serves as cofactor. In terms of processing, activated by phosphorylation.

It carries out the reaction alpha-D-glucosamine 1-phosphate = D-glucosamine 6-phosphate. Catalyzes the conversion of glucosamine-6-phosphate to glucosamine-1-phosphate. This chain is Phosphoglucosamine mutase, found in Campylobacter jejuni subsp. jejuni serotype O:23/36 (strain 81-176).